A 91-amino-acid chain; its full sequence is Lactococcin-B immunity protein (91 aa).

Imparts immunity to lactococcin-B to naturally sensitive host strains. The polypeptide is Lactococcin-B immunity protein (lciB) (Lactococcus lactis subsp. cremoris (Streptococcus cremoris)).